A 553-amino-acid polypeptide reads, in one-letter code: Solute carrier family 22 member 12 (553 aa).

Residues 9–29 (LVGGLGRFQVLQTMALMVSIM) traverse the membrane as a helical segment. Asn56 and Asn102 each carry an N-linked (GlcNAc...) asparagine glycan. The next 11 helical transmembrane spans lie at 146–166 (PMAQSIYLAGILVGAAACGPA), 174–194 (LVLTWSYLQMAVMGTAAAFAP), 195–215 (AFPVYCLFRFLLAFAVAGVMM), 232–252 (LVMTLNSLGFSFGHGLTAAVA), 260–280 (LLQLVVSVPFFLCFLYSWWLA), 351–371 (CISTLCWFAFGFTFFGLALDL), 378–398 (IFLLQMFIGVVDIPAKMGALL), 407–427 (PTLAASLLLAGLCILANTLVP), 435–455 (SALAVLGLGGVGAAFTCITIY), 466–486 (MTAVGLGQMAARGGAILGPLV), and 495–515 (WLPLLVYGTVPVLSGLAALLL). Thr542 bears the Phosphothreonine mark.

The protein belongs to the major facilitator (TC 2.A.1) superfamily. Organic cation transporter (TC 2.A.1.19) family. Interacts with PDZK1. Post-translationally, N-glycosylated. In terms of tissue distribution, detected in kidney (at protein level). Detected in fetal and adult kidney. Detected in epithelial cells of proximal tubules in renal cortex.

It is found in the apical cell membrane. The catalysed reaction is urate(out) + (S)-lactate(in) = urate(in) + (S)-lactate(out). The enzyme catalyses nicotinate(in) + urate(out) = nicotinate(out) + urate(in). It carries out the reaction urate(out) + n chloride(in) = urate(in) + n chloride(out). It catalyses the reaction orotate(out) + nicotinate(in) = orotate(in) + nicotinate(out). Functionally, electroneutral antiporter that translocates urate across the apical membrane of proximal tubular cells in exchange for monovalent organic or inorganic anions. Involved in renal reabsorption of urate and helps maintaining blood levels of uric acid. Mediates urate uptake by an exchange with organic anions such as (S)-lactate and nicotinate, and inorganic anion Cl(-). Other inorganic anions such as Br(-), I(-) and NO3(-) may also act as counteranions that exchange for urate. Also mediates orotate tubular uptake coupled with nicotinate efflux and to a lesser extent with lactate efflux, therefore displaying a potential role in orotate renal reabsorption. Orotate transport is Cl(-)-dependent. The chain is Solute carrier family 22 member 12 from Homo sapiens (Human).